The primary structure comprises 60 residues: Large ribosomal subunit protein uL30 (60 aa).

The protein belongs to the universal ribosomal protein uL30 family. In terms of assembly, part of the 50S ribosomal subunit.

The chain is Large ribosomal subunit protein uL30 from Streptomyces griseus subsp. griseus (strain JCM 4626 / CBS 651.72 / NBRC 13350 / KCC S-0626 / ISP 5235).